Here is an 89-residue protein sequence, read N- to C-terminus: Small ribosomal subunit protein uS15 (89 aa).

This sequence belongs to the universal ribosomal protein uS15 family. In terms of assembly, part of the 30S ribosomal subunit. Forms a bridge to the 50S subunit in the 70S ribosome, contacting the 23S rRNA.

One of the primary rRNA binding proteins, it binds directly to 16S rRNA where it helps nucleate assembly of the platform of the 30S subunit by binding and bridging several RNA helices of the 16S rRNA. Its function is as follows. Forms an intersubunit bridge (bridge B4) with the 23S rRNA of the 50S subunit in the ribosome. This chain is Small ribosomal subunit protein uS15, found in Nocardia farcinica (strain IFM 10152).